The chain runs to 396 residues: MDPDAFLFKWDHRTALPQPNRLLDAVAPPPPPPPQAPSYSMRPRELGGLEELFQAYGIRYYTAAKIAELGFTVNTLLDMRDEELDEMMNSLCQIFRWDLLVGERYGIKAAVRAERRRIDEEEVRRRHLLLGDTTHALDALSQEGLSEEPVQQEKEAMGSGGGGVGGVWEMMGAGGRKAPQRRRKNYKGRSRMASMEEDDDDDDDETEGAEDDENIVSERQREHPFIVTEPGEVARGKKNGLDYLFHLYEQCRDFLIQVQTIAKERGEKCPTKVTNQVFRYAKKAGANYINKPKMRHYVHCYALHCLDEAASNALRRAFKERGENVGAWRQACYKPLVAIAARQGWDIDTIFNAHPRLSIWYVPTKLRQLCHAERSSAAVAATSSITGGGPADHLPF.

The tract at residues 144-223 (GLSEEPVQQE…NIVSERQREH (80 aa)) is disordered. Residues 178 to 190 (APQRRRKNYKGRS) show a composition bias toward basic residues. Over residues 195–215 (MEEDDDDDDDETEGAEDDENI) the composition is skewed to acidic residues. DNA-binding regions lie at residues 221 to 225 (REHPF), 290 to 297 (NKPKMRHY), and 361 to 364 (YVPT).

Belongs to the FLO/LFY family. Bract, sepal, petal, and carpel primordia, but not in stamen primordia.

It localises to the nucleus. Required for flower development. FLO may interact in a sequential manner with other homeotic genes affecting floral organ identity. In Antirrhinum majus (Garden snapdragon), this protein is Floricaula protein (FLO).